A 119-amino-acid polypeptide reads, in one-letter code: Ribosome-binding factor A (119 aa).

The protein belongs to the RbfA family. As to quaternary structure, monomer. Binds 30S ribosomal subunits, but not 50S ribosomal subunits or 70S ribosomes.

Its subcellular location is the cytoplasm. One of several proteins that assist in the late maturation steps of the functional core of the 30S ribosomal subunit. Associates with free 30S ribosomal subunits (but not with 30S subunits that are part of 70S ribosomes or polysomes). Required for efficient processing of 16S rRNA. May interact with the 5'-terminal helix region of 16S rRNA. This is Ribosome-binding factor A from Mycoplasmoides gallisepticum (strain R(low / passage 15 / clone 2)) (Mycoplasma gallisepticum).